Here is a 488-residue protein sequence, read N- to C-terminus: Auxin transporter-like protein 1 (488 aa).

The tract at residues 1–36 (MSGEKQAEESIVVSGEDEVAGRKVEDSAAEEDIDGN) is disordered. Residues 1-64 (MSGEKQAEES…DAWFSCASNQ (64 aa)) are Cytoplasmic-facing. Residues 65–82 (VAQVLLTLPYSFSQLGML) traverse the membrane as a helical segment. At 83-84 (SG) the chain is on the extracellular side. Residues 85–105 (ILLQIFYGLMGSWTAYLISVL) traverse the membrane as a helical segment. Over 106–141 (YVEYRARMEKQEAKSFKNHVIQWFEVLDGLLGPYWK) the chain is Cytoplasmic. Residues 142-162 (AAGLAFNCTFLLFGSVIQLIA) form a helical membrane-spanning segment. Over 163–178 (CASNIYYINDRLDKRT) the chain is Extracellular. Residues 179-199 (WTYIFGACCATTVFIPSFHNY) traverse the membrane as a helical segment. The Cytoplasmic portion of the chain corresponds to 200–202 (RIW). A helical transmembrane segment spans residues 203–223 (SFLGLGMTTYTAWYLTIASFL). Over 224 to 238 (HGQAEGVTHSGPTKL) the chain is Extracellular. The helical transmembrane segment at 239 to 259 (VLYFTGATNILYTFGGHAVTV) threads the bilayer. Topologically, residues 260–273 (EIMHAMWKPRKFKS) are cytoplasmic. Residues 274–294 (IYLMATLYVFTLTLPSASAVY) form a helical membrane-spanning segment. Topologically, residues 295-320 (WAFGDQLLNHSNAFSLLPKTRFRDTA) are extracellular. An N-linked (GlcNAc...) asparagine glycan is attached at N303. A helical membrane pass occupies residues 321 to 341 (VILMLIHQFITFGFACTPLYF). The Cytoplasmic segment spans residues 342–362 (VWEKAIGMHHTKSLCLRALVR). The helical transmembrane segment at 363–383 (LPVVVPIWFLAIIFPFFGPIN) threads the bilayer. S384 is a topological domain (extracellular). The helical transmembrane segment at 385–405 (AVGALLVTFTVYIIPALAHML) threads the bilayer. The Cytoplasmic segment spans residues 406 to 427 (TYRTASARRNAAEKPPFFIPSW). Residues 428 to 448 (AGVYVINAFIVVWVLVLGFGF) form a helical membrane-spanning segment. Residues 449–488 (GGWASMTNFIRQIDTFGLFAKCYQCKPPPAPIAAGAHHRR) are Extracellular-facing.

Belongs to the amino acid/polyamine transporter 2 family. Amino acid/auxin permease (AAAP) (TC 2.A.18.1) subfamily.

The protein resides in the cell membrane. Functionally, carrier protein involved in proton-driven auxin influx. Mediates the formation of auxin gradient from developing leaves (site of auxin biosynthesis) to tips by contributing to the loading of auxin in vascular tissues and facilitating acropetal (base to tip) auxin transport within inner tissues of the root apex, and basipetal (tip to base) auxin transport within outer tissues of the root apex. This chain is Auxin transporter-like protein 1 (LAX1), found in Arabidopsis thaliana (Mouse-ear cress).